Reading from the N-terminus, the 367-residue chain is MLSAGIVGLPNVGKSTLFSAITNLQVEIANYPFATIEPNTGIVNVSDERLDKLASLINPEKIVYTTFRFVDIAGLVKGASQGQGLGNQFLANIREVDLICHVVRCFQDKKIVHVNNTIDPVFDFEIIVNELIQADFELITNRIGKLKRKAESGDKIAKEEFVLLEIVLNGLKQGQMPIQTLSESELKTIKSLNLLTAKPILIVANVSENDLLNLDNNEALKKLNAFLDQKKIPKAITVCSLIEKELSGLKLEQRQYFLDELGLKNYSGLNRVIQAAYQTLNLWSFFTFGKKEVRAWTFKKGWNAPQCAGQIHSDFEKGFIKVEVISWDQLFAMKSLQEAKKQGLIRLEGKNYLIKDGDVCNFKFNVT.

The OBG-type G domain maps to 2–258 (LSAGIVGLPN…LKLEQRQYFL (257 aa)). ATP is bound at residue 11 to 16 (NVGKST). Residues serine 15 and threonine 35 each coordinate Mg(2+). The region spanning 281-364 (NLWSFFTFGK…KDGDVCNFKF (84 aa)) is the TGS domain.

This sequence belongs to the TRAFAC class OBG-HflX-like GTPase superfamily. OBG GTPase family. YchF/OLA1 subfamily. Requires Mg(2+) as cofactor.

Its function is as follows. ATPase that binds to both the 70S ribosome and the 50S ribosomal subunit in a nucleotide-independent manner. In Mycoplasma genitalium (strain ATCC 33530 / DSM 19775 / NCTC 10195 / G37) (Mycoplasmoides genitalium), this protein is Ribosome-binding ATPase YchF.